Here is a 190-residue protein sequence, read N- to C-terminus: MAVEPSGKLIVFSAPSGAGKTTIATMVLQRIANLSFSVSATTRKQREGEQDGVNYYFLDKATFEKKIEQGGFIEHEFFFGNYYGTLLDATESVLASGKNLLLDVDVKGALNVRKLFGERSLLIFIQPPSMEVLIERLQGRGSEDDAALQERLERARFEMSFADQFDTIIVNNNLTAAVDDVEAAIVNFIG.

One can recognise a Guanylate kinase-like domain in the interval 7–186 (GKLIVFSAPS…AVDDVEAAIV (180 aa)). 14 to 21 (APSGAGKT) lines the ATP pocket.

This sequence belongs to the guanylate kinase family.

The protein resides in the cytoplasm. It carries out the reaction GMP + ATP = GDP + ADP. Functionally, essential for recycling GMP and indirectly, cGMP. This Chlorobium chlorochromatii (strain CaD3) protein is Guanylate kinase.